The primary structure comprises 589 residues: Formate--tetrahydrofolate ligase (589 aa).

74 to 81 (TPFGEGKS) contributes to the ATP binding site.

Belongs to the formate--tetrahydrofolate ligase family.

The enzyme catalyses (6S)-5,6,7,8-tetrahydrofolate + formate + ATP = (6R)-10-formyltetrahydrofolate + ADP + phosphate. Its pathway is one-carbon metabolism; tetrahydrofolate interconversion. The protein is Formate--tetrahydrofolate ligase of Thermodesulfovibrio yellowstonii (strain ATCC 51303 / DSM 11347 / YP87).